Here is an 878-residue protein sequence, read N- to C-terminus: NUT family member 2A (878 aa).

4 disordered regions span residues 273–324, 417–566, 627–757, and 775–878; these read WSQG…DDSC, QKSQ…LSYT, KEKQ…EEEE, and WLPQ…RCSQ. Composition is skewed to pro residues over residues 278-288 and 427-444; these read PLPPPPPPAAQ and CLPPPATPRLEPRGPPAP. Residues 476 to 487 are compositionally biased toward basic residues; sequence TKARRPPPRPHR. Residues 537 to 551 are compositionally biased toward basic and acidic residues; that stretch reads EPEKQREEGEVKQPQ.

The protein belongs to the NUT family.

The sequence is that of NUT family member 2A (NUTM2A) from Homo sapiens (Human).